Consider the following 706-residue polypeptide: DNA ligase (706 aa).

NAD(+)-binding positions include 48-52 (DAAYD), 97-98 (SL), and glutamate 131. Lysine 133 serves as the catalytic N6-AMP-lysine intermediate. NAD(+) contacts are provided by arginine 154, glutamate 191, lysine 307, and lysine 331. The Zn(2+) site is built by cysteine 425, cysteine 428, cysteine 443, and cysteine 449. Positions 628–706 (RADSAVAGKT…EDEWLKLIEG (79 aa)) constitute a BRCT domain.

This sequence belongs to the NAD-dependent DNA ligase family. LigA subfamily. Requires Mg(2+) as cofactor. It depends on Mn(2+) as a cofactor.

It carries out the reaction NAD(+) + (deoxyribonucleotide)n-3'-hydroxyl + 5'-phospho-(deoxyribonucleotide)m = (deoxyribonucleotide)n+m + AMP + beta-nicotinamide D-nucleotide.. Its function is as follows. DNA ligase that catalyzes the formation of phosphodiester linkages between 5'-phosphoryl and 3'-hydroxyl groups in double-stranded DNA using NAD as a coenzyme and as the energy source for the reaction. It is essential for DNA replication and repair of damaged DNA. This is DNA ligase from Afipia carboxidovorans (strain ATCC 49405 / DSM 1227 / KCTC 32145 / OM5) (Oligotropha carboxidovorans).